The chain runs to 504 residues: Glutamate--tRNA ligase (504 aa).

The short motif at 10–20 (PSPTGDPHVGT) is the 'HIGH' region element. A 'KMSKS' region motif is present at residues 251–255 (KLSKR). Residue lysine 254 participates in ATP binding.

It belongs to the class-I aminoacyl-tRNA synthetase family. Glutamate--tRNA ligase type 1 subfamily. Monomer.

It is found in the cytoplasm. The enzyme catalyses tRNA(Glu) + L-glutamate + ATP = L-glutamyl-tRNA(Glu) + AMP + diphosphate. In terms of biological role, catalyzes the attachment of glutamate to tRNA(Glu) in a two-step reaction: glutamate is first activated by ATP to form Glu-AMP and then transferred to the acceptor end of tRNA(Glu). This is Glutamate--tRNA ligase from Cellvibrio japonicus (strain Ueda107) (Pseudomonas fluorescens subsp. cellulosa).